The sequence spans 251 residues: Probable transcriptional regulatory protein jk1057 (251 aa).

Residues 1 to 22 (MAGHSKWATTKHKKAANDAKRG) are disordered.

It belongs to the TACO1 family.

Its subcellular location is the cytoplasm. The sequence is that of Probable transcriptional regulatory protein jk1057 from Corynebacterium jeikeium (strain K411).